The chain runs to 114 residues: Vacuolar morphogenesis protein 10 (114 aa).

It localises to the vacuole membrane. Its function is as follows. Required for vacuolar fusion. Involved in the early steps of the fusion pathway. The protein is Vacuolar morphogenesis protein 10 (VAM10) of Saccharomyces cerevisiae (strain ATCC 204508 / S288c) (Baker's yeast).